The chain runs to 344 residues: MPKKLVLVIDRDDDLGQKAGISSPVIGRDNIVSAAVRLGTADPEDSDVNAMFAAIKIYDELKGRGEDVEVVVVCGDRSVGVVSDSKIAEQLDRVVLNLRPSSAIVVTDGSEDEFVLPIISSRVKIDSVHRVVVRQSRTIESTYFLIRRMLNDPKIARITLAPLGMIFLVYSIFLVMQHPEWGLGGIIFFLGVYFMVKAYGWEQNIANLLETVRVSLVEGRLSFIFYVTSAILLIISIVNGFNAAVNIADAAQAISSFIFYSTWWFVLSGIFALLARAADAYAEKRRVSKYFTIIFLLIAFGLIVWASAAYVLNPEAPNALQNLAGAIVGAILIAAIGVFTLKRL.

A run of 6 helical transmembrane segments spans residues 155–175 (IARITLAPLGMIFLVYSIFLV), 181–201 (WGLGGIIFFLGVYFMVKAYGW), 221–241 (LSFIFYVTSAILLIISIVNGF), 254–274 (ISSFIFYSTWWFVLSGIFALL), 291–311 (FTIIFLLIAFGLIVWASAAYV), and 319–339 (ALQNLAGAIVGAILIAAIGVF).

The protein to M.jannaschii MJ1032.

The protein localises to the cell membrane. This is an uncharacterized protein from Archaeoglobus fulgidus (strain ATCC 49558 / DSM 4304 / JCM 9628 / NBRC 100126 / VC-16).